Here is a 213-residue protein sequence, read N- to C-terminus: Adenylate kinase (213 aa).

10–15 (GAGKGT) lines the ATP pocket. Residues 30–59 (STGDMLRAAVAAGSEVGLRAKAAMESGSLV) form an NMP region. AMP contacts are provided by residues T31, R36, 57 to 59 (SLV), 85 to 88 (GFPR), and Q92. The LID stretch occupies residues 126–163 (GRSSCEKCGEGYHDSFKPSAQPNVCDKCSGTLKRRADD). An ATP-binding site is contributed by R127. The Zn(2+) site is built by C130, C133, C150, and C153. AMP is bound by residues R160 and R171. Q199 serves as a coordination point for ATP.

This sequence belongs to the adenylate kinase family. In terms of assembly, monomer.

It is found in the cytoplasm. It catalyses the reaction AMP + ATP = 2 ADP. It participates in purine metabolism; AMP biosynthesis via salvage pathway; AMP from ADP: step 1/1. Its function is as follows. Catalyzes the reversible transfer of the terminal phosphate group between ATP and AMP. Plays an important role in cellular energy homeostasis and in adenine nucleotide metabolism. This is Adenylate kinase from Magnetococcus marinus (strain ATCC BAA-1437 / JCM 17883 / MC-1).